A 76-amino-acid polypeptide reads, in one-letter code: MDVPRNENSSDFPIRCFSCGAVIGHLYDEYKQKLSEGKSPKEALDELGIERYCCRRMFITHKSVIKELSRFHGAVG.

Zn(2+)-binding residues include Cys16, Cys19, Cys53, and Cys54.

Belongs to the archaeal Rpo10/eukaryotic RPB10 RNA polymerase subunit family. Part of the RNA polymerase complex. Requires Zn(2+) as cofactor.

It is found in the cytoplasm. It carries out the reaction RNA(n) + a ribonucleoside 5'-triphosphate = RNA(n+1) + diphosphate. In terms of biological role, DNA-dependent RNA polymerase (RNAP) catalyzes the transcription of DNA into RNA using the four ribonucleoside triphosphates as substrates. This chain is DNA-directed RNA polymerase subunit Rpo10, found in Archaeoglobus fulgidus (strain ATCC 49558 / DSM 4304 / JCM 9628 / NBRC 100126 / VC-16).